A 344-amino-acid polypeptide reads, in one-letter code: uncharacterized protein (344 aa).

Topologically, residues 1–98 are cytoplasmic; that stretch reads MIDFVKSRDT…NNDEIGIWNY (98 aa). Residues 99 to 119 traverse the membrane as a helical segment; that stretch reads ISVAEMGGVLLFLSYWIWTCL. A topological domain (lumenal) is located at residue histidine 120. A helical membrane pass occupies residues 121 to 141; the sequence is FSKIIFPAQKVICLYIFLFAL. At 142–169 the chain is on the cytoplasmic side; it reads NQTLQECIEEYVFSSECIKYRQFYSVYE. A helical transmembrane segment spans residues 170-192; that stretch reads IIDFLRTNFYRLFVIYCALGFGI. Over 193-198 the chain is Lumenal; that stretch reads TRTVPK. Residues 199–219 traverse the membrane as a helical segment; the sequence is YLMIKGISIVIALCSVYWISL. Topologically, residues 220–222 are cytoplasmic; it reads YKD. The helical transmembrane segment at 223–243 threads the bilayer; that stretch reads VYVVSEIFDMIQYEVFPAIWV. The Lumenal portion of the chain corresponds to 244-273; it reads YSICHLLKQCTSVTTYENASKARFFRRMLN. Residues 274–294 traverse the membrane as a helical segment; the sequence is AFIFIFCASPMLHYLSNIIFG. Residues 295–344 are Cytoplasmic-facing; the sequence is NFDYRLSVIIGDLFTFMEKIAFPCYIMFPTHNEALAYNRNVAEEAQEKMI.

It localises to the endoplasmic reticulum membrane. This is an uncharacterized protein from Schizosaccharomyces pombe (strain 972 / ATCC 24843) (Fission yeast).